The chain runs to 276 residues: Lyso-ornithine lipid O-acyltransferase (276 aa).

A helical membrane pass occupies residues 25-47 (LALRGGAMALVLMAGLTLHLAVR).

This sequence belongs to the 1-acyl-sn-glycerol-3-phosphate acyltransferase family. OlsA subfamily.

The protein resides in the membrane. The enzyme catalyses a lyso-ornithine lipid + a fatty acyl-[ACP] = an N(2)-[(3R)-3-(acyloxy)acyl]-L-ornithine lipid + holo-[ACP]. It catalyses the reaction a fatty acyl-[ACP] + a 1-acyl-sn-glycero-3-phosphate = a 1,2-diacyl-sn-glycero-3-phosphate + holo-[ACP]. The protein operates within lipid metabolism. It functions in the pathway phospholipid metabolism. In terms of biological role, catalyzes the second step in the formation of ornithine lipids, which are phosphorus-free membrane lipids. Uses acyl-acyl carrier protein (acyl-AcpP) as an acyl donor and converts lyso-ornithine lipid (LOL) into ornithine lipid (OL). It can also act as an alternate acyl-sn-glycerol-3-phosphate acyltransferase (AGPAT) to ensure glycerophospholipid production. The protein is Lyso-ornithine lipid O-acyltransferase of Rhodobacter capsulatus (strain ATCC BAA-309 / NBRC 16581 / SB1003).